Reading from the N-terminus, the 364-residue chain is MERLTVTLGERSYPITIAAGLFNDPASFLPLKSGDQAMLVTNETLAPLYLDTVRSVLEQAGVNVDSVILPDGEQYKSLAVMDTVFTALLQKPHGRDTTLVALGGGVIGDLTGFAAASYQRGVRFIQVPTTLLSQVDSSVGGKTAVNHPLGKNMIGAFWQPVSVVVDLNCLKTLPARELASGLAEVIKYGVILDGEFFSWLENNIDALLALDEKAMAYCIRRCCELKAEVVAADERETGLRALLNLGHTFGHAIEAEMGYGNWLHGEAVAAGMVMAAHTSERLGQFRAQDTQRIIDLLKRAGLPVRGPQEMSAQAYLPHMMRDKKVLAGDMRLVLPLAIGSSELRGGVPHDVVLGAIADTQQAQQ.

NAD(+)-binding positions include 71 to 76, 105 to 109, 129 to 130, Lys142, Lys151, and 169 to 172; these read DGEQYK, GVIGD, TT, and CLKT. 3 residues coordinate Zn(2+): Glu184, His247, and His264.

It belongs to the sugar phosphate cyclases superfamily. Dehydroquinate synthase family. It depends on Co(2+) as a cofactor. Zn(2+) serves as cofactor. The cofactor is NAD(+).

The protein resides in the cytoplasm. It catalyses the reaction 7-phospho-2-dehydro-3-deoxy-D-arabino-heptonate = 3-dehydroquinate + phosphate. It functions in the pathway metabolic intermediate biosynthesis; chorismate biosynthesis; chorismate from D-erythrose 4-phosphate and phosphoenolpyruvate: step 2/7. Its function is as follows. Catalyzes the conversion of 3-deoxy-D-arabino-heptulosonate 7-phosphate (DAHP) to dehydroquinate (DHQ). This Klebsiella pneumoniae (strain 342) protein is 3-dehydroquinate synthase.